The chain runs to 421 residues: MKPLAYRMRPTKIEDIIGQQHLVAEDKIIGRMVQAKHLSSMILYGPPGIGKTSIATAIAGSTSIAFRKLNAVINNKKDMEIVAQEAKMSGQVILILDEVHRLDKGKQDFLLPYLENGMIILIGATTANPYHAINPAIRSRTQIFELEPLTPELIKQALERALHDEHRGLGTYSVSIDDQAMEHFAHGCGGDVRSALNALELAVLSTKESADGEIHITLETAEECLQKKSFSHDKDGDAHYDVLSAFQKSIRGSDANAALHYLARLIEAGDLESIARRLLVIAYEDIGLASPQAGPRVLNAIQTAERVGFPEARIPLANAVIELCLSPKSNSAILAIDEALADIRAGKIGDVPKHLKDAHYKGAQELGRGIDYKYPHNYDNGWVEQQYLPDPLKNKQYYKPKQTGKFESALKQVYDKLMKRK.

45–52 contributes to the ATP binding site; the sequence is GPPGIGKT.

Belongs to the AAA ATPase family. RarA/MGS1/WRNIP1 subfamily. As to quaternary structure, homotetramer. Interacts with single-stranded binding protein SsbA. May interact with PriA.

It is found in the cytoplasm. The protein localises to the nucleoid. SsDNA-dependent ATP hydrolysis is stimulated by single-stranded binding protein SsbA but not by SsbB; in the presence of SsbB, ssDNA secondary structure is removed and RarA's ATPase activity is decreased. The C-terminal 9 residues of SsbA are sufficient to stimulate ATPase activity. Functionally, plays a role in recombination-dependent DNA replication. Positively affects the formation of RecA threads during response to DNA damage, directly or indirectly counteracting the negative RecA modulators RecX and RecU. Stabilizes a RecA-ssDNA complex. In vitro, in the presence of SsbA, inhibits PriA-dependent DNA replication restart of both leading and lagging strands; elongation is insensitive to RarA. Plays a role in response to DNA damage, localizes to the replication fork but also to DNA elsewhere in the cell. Probably required for repair of single-stranded nicks generated by H(2)O(2). Epistatic to RecA, partially represses deletions of the error-prone translesion DNA polymerases (dinB1 and dinB2), genetically interacts with replicative helicase loaders dnaB and dnaD. Epistatic to recF and recO mutations upon DNA damage. A DNA-dependent ATPase stimulated by hairpin structures in circular single-stranded (ss)DNA or ssDNA-dsDNA junctions, by blunt end and 5'-tailed dsDNA and by single-stranded binding protein SsbA protein bound to ssDNA. Preferentially binds ssDNA and replication-fork structures; SsbA stimulates binding to ssDNA. Addition of ATP to the protein has no visible effect in vitro. In Bacillus subtilis (strain 168), this protein is Replication-associated recombination protein A.